We begin with the raw amino-acid sequence, 290 residues long: Putative phosphatase MPN_427 (290 aa).

The active-site Nucleophile is the Asp16. Asp16 contacts Mg(2+). Residue Leu17 coordinates phosphate. Asp18 contacts Mg(2+). Phosphate-binding positions include 53–54 (TG) and Lys216. Mg(2+) contacts are provided by Asp239 and Ser240. Residue Asn242 participates in phosphate binding.

The protein belongs to the HAD-like hydrolase superfamily. Cof family. Mg(2+) is required as a cofactor.

This is Putative phosphatase MPN_427 from Mycoplasma pneumoniae (strain ATCC 29342 / M129 / Subtype 1) (Mycoplasmoides pneumoniae).